The chain runs to 242 residues: Glucosamine-6-phosphate deaminase (242 aa).

The active-site Proton acceptor; for enolization step is the Asp-67. Asn-136 acts as the For ring-opening step in catalysis. His-138 serves as the catalytic Proton acceptor; for ring-opening step. Glu-143 functions as the For ring-opening step in the catalytic mechanism.

Belongs to the glucosamine/galactosamine-6-phosphate isomerase family. NagB subfamily.

It carries out the reaction alpha-D-glucosamine 6-phosphate + H2O = beta-D-fructose 6-phosphate + NH4(+). It functions in the pathway amino-sugar metabolism; N-acetylneuraminate degradation; D-fructose 6-phosphate from N-acetylneuraminate: step 5/5. Its function is as follows. Catalyzes the reversible isomerization-deamination of glucosamine 6-phosphate (GlcN6P) to form fructose 6-phosphate (Fru6P) and ammonium ion. This Clostridium beijerinckii (strain ATCC 51743 / NCIMB 8052) (Clostridium acetobutylicum) protein is Glucosamine-6-phosphate deaminase.